The sequence spans 153 residues: MVVLNPNNWHWVDKNTLPWSKDYLNGKLTSLSTVSSDGKSKIELTQVSSITGDSNVSQRKGKPICYFDLQLSMNVKVTNLDTNKDDEDDDGILADGKLEIPEFMHDESDIPILSQGFDAFDGLVRSEFVPKVVETLLKYQDDLIKEHSKDIQV.

This sequence belongs to the AHA1 family. Monomer. Interacts with HSP82.

Its subcellular location is the cytoplasm. The protein localises to the nucleus. Functionally, co-chaperone that binds to the molecular chaperone HSP82 and stimulates its ATPase activity. Although not essential, it confers thermotolerance when intracellular levels of HSP82 are limiting. The sequence is that of Hsp90 co-chaperone HCH1 (HCH1) from Saccharomyces cerevisiae (strain ATCC 204508 / S288c) (Baker's yeast).